The primary structure comprises 156 residues: Small ribosomal subunit protein uS7 (156 aa).

Belongs to the universal ribosomal protein uS7 family. As to quaternary structure, part of the 30S ribosomal subunit. Contacts proteins S9 and S11.

Functionally, one of the primary rRNA binding proteins, it binds directly to 16S rRNA where it nucleates assembly of the head domain of the 30S subunit. Is located at the subunit interface close to the decoding center, probably blocks exit of the E-site tRNA. The polypeptide is Small ribosomal subunit protein uS7 (Nitrobacter hamburgensis (strain DSM 10229 / NCIMB 13809 / X14)).